A 465-amino-acid chain; its full sequence is MSASLARGILSKMGGSCCPHHAPATNPFKLAKLHGNNKSTDYAFEMVCSTLRFGKGVTLEIGYDVRNLGAKKTLLITDKNVQNTIAFKNAEQALKMVNIEYEVFDDVLIEPTVNSMQKAIAFAKSKQFDSFIAVGGGSVIDTTKAAALYASNPEADFLDFVGPPFGKSMQPKNPMLPLIAVPTTAGTGSETTAAAIMDLPEHKCKTGIRLRCIKPYLAVVDPLNVMSMPRNVAIYSGFDVLCHALESFTALPFDQRSPRPENPGVRPLYQGSNPISDVWSKEALRIIGKYFRRSIFDPTDEEARTEMLKASSFAGIGFGNAGVHLCHGLSYPISSQAKSCVADDYPKEKNLIPHGLSVMTTAVADFEFTTAACPDRHLISAQTLGADIPNNASNEYISRTLCDRLRGYMRDFGVPNGLKGMGFEFSDIEMLTEAASHSVPNIAISPKSADREIISTLYEKSLTVY.

The protein belongs to the iron-containing alcohol dehydrogenase family. Hydroxyacid-oxoacid transhydrogenase subfamily.

Its subcellular location is the mitochondrion. It catalyses the reaction (S)-3-hydroxybutanoate + 2-oxoglutarate = (R)-2-hydroxyglutarate + acetoacetate. It carries out the reaction 4-hydroxybutanoate + 2-oxoglutarate = (R)-2-hydroxyglutarate + succinate semialdehyde. Its function is as follows. Catalyzes the cofactor-independent reversible oxidation of gamma-hydroxybutyrate (GHB) to succinic semialdehyde (SSA) coupled to reduction of 2-ketoglutarate (2-KG) to D-2-hydroxyglutarate (D-2-HG). L-3-hydroxybutyrate (L-3-OHB) is also a substrate for HOT when using 2-KG as hydrogen acceptor, resulting in the formation of D-2-HG. This chain is Hydroxyacid-oxoacid transhydrogenase, mitochondrial, found in Caenorhabditis elegans.